We begin with the raw amino-acid sequence, 88 residues long: Small ribosomal subunit protein bS16 (88 aa).

This sequence belongs to the bacterial ribosomal protein bS16 family.

In Leptospira interrogans serogroup Icterohaemorrhagiae serovar Lai (strain 56601), this protein is Small ribosomal subunit protein bS16.